Reading from the N-terminus, the 117-residue chain is G antigen 12H (117 aa).

Residues 1–117 (MSWRGRSTYY…PEEGEKQSQC (117 aa)) are disordered. 2 stretches are compositionally biased toward acidic residues: residues 32-45 (FSDEVEPATPEEGE) and 87-96 (ECEDGPDGQE). Residues 103 to 117 (EEVKTPEEGEKQSQC) show a composition bias toward basic and acidic residues.

The protein belongs to the GAGE family.

This chain is G antigen 12H (GAGE12H), found in Homo sapiens (Human).